A 57-amino-acid polypeptide reads, in one-letter code: Large ribosomal subunit protein bL32 (57 aa).

Residues 1 to 20 (MAVPKKKTSKAKRDQRRATW) are compositionally biased toward basic residues. The segment at 1-24 (MAVPKKKTSKAKRDQRRATWRRQA) is disordered.

This sequence belongs to the bacterial ribosomal protein bL32 family.

The sequence is that of Large ribosomal subunit protein bL32 from Gloeothece citriformis (strain PCC 7424) (Cyanothece sp. (strain PCC 7424)).